A 374-amino-acid polypeptide reads, in one-letter code: N5-carboxyaminoimidazole ribonucleotide synthase (374 aa).

ATP-binding positions include arginine 108, lysine 148, 153–159 (GYDGKGQ), 183–186 (EKYL), glutamate 191, histidine 214, and 266–267 (NE). Positions 112–296 (KETLKSAGTK…QFDTHILAVT (185 aa)) constitute an ATP-grasp domain.

This sequence belongs to the PurK/PurT family. As to quaternary structure, homodimer.

The enzyme catalyses 5-amino-1-(5-phospho-beta-D-ribosyl)imidazole + hydrogencarbonate + ATP = 5-carboxyamino-1-(5-phospho-D-ribosyl)imidazole + ADP + phosphate + 2 H(+). It participates in purine metabolism; IMP biosynthesis via de novo pathway; 5-amino-1-(5-phospho-D-ribosyl)imidazole-4-carboxylate from 5-amino-1-(5-phospho-D-ribosyl)imidazole (N5-CAIR route): step 1/2. Its function is as follows. Catalyzes the ATP-dependent conversion of 5-aminoimidazole ribonucleotide (AIR) and HCO(3)(-) to N5-carboxyaminoimidazole ribonucleotide (N5-CAIR). This is N5-carboxyaminoimidazole ribonucleotide synthase from Staphylococcus aureus (strain MRSA252).